A 110-amino-acid polypeptide reads, in one-letter code: UPF0122 protein SP70585_1353 (110 aa).

The protein belongs to the UPF0122 family.

Might take part in the signal recognition particle (SRP) pathway. This is inferred from the conservation of its genetic proximity to ftsY/ffh. May be a regulatory protein. The sequence is that of UPF0122 protein SP70585_1353 from Streptococcus pneumoniae (strain 70585).